An 89-amino-acid chain; its full sequence is Small ribosomal subunit protein uS14 (89 aa).

It belongs to the universal ribosomal protein uS14 family. Part of the 30S ribosomal subunit. Contacts proteins S3 and S10.

Functionally, binds 16S rRNA, required for the assembly of 30S particles and may also be responsible for determining the conformation of the 16S rRNA at the A site. The sequence is that of Small ribosomal subunit protein uS14 from Oenococcus oeni (strain ATCC BAA-331 / PSU-1).